A 436-amino-acid chain; its full sequence is Prenyltransferase nscD (436 aa).

It belongs to the tryptophan dimethylallyltransferase family.

It functions in the pathway secondary metabolite biosynthesis. In terms of biological role, prenyltransferase; part of the gene cluster that mediates the biosynthesis of neosartoricin B, a prenylated anthracenone that probably exhibits T-cell antiproliferative activity, suggestive of a physiological role as an immunosuppressive agent. The non-reducing polyketide synthase nscA probably synthesizes and cyclizes the decaketide backbone. The hydrolase nscB then mediates the product release through hydrolysis followed by spontaneous decarboxylation. The prenyltransferase nscD catalyzes the addition of the dimethylallyl group to the aromatic C5. The FAD-dependent monooxygenase nscC is then responsible for the stereospecific hydroxylation at C2. Neosartoricin B can be converted into two additional compounds neosartoricins C and D. Neosartoricin C is a spirocyclic compound that is cyclized through the attack of C3 hydroxyl on C14, followed by dehydration. On the other hand, neosartoricin D is a further cyclized compound in which attack of C2 on C14 in neosartoricin C results in the formation of the acetal-containing dioxabicyclo-octanone ring. Both of these compounds are novel and possibly represent related metabolites of the gene cluster. This Arthroderma gypseum (strain ATCC MYA-4604 / CBS 118893) (Microsporum gypseum) protein is Prenyltransferase nscD.